A 120-amino-acid polypeptide reads, in one-letter code: Ribosome-binding factor A (120 aa).

This sequence belongs to the RbfA family. In terms of assembly, monomer. Binds 30S ribosomal subunits, but not 50S ribosomal subunits or 70S ribosomes.

It localises to the cytoplasm. Its function is as follows. One of several proteins that assist in the late maturation steps of the functional core of the 30S ribosomal subunit. Associates with free 30S ribosomal subunits (but not with 30S subunits that are part of 70S ribosomes or polysomes). Required for efficient processing of 16S rRNA. May interact with the 5'-terminal helix region of 16S rRNA. In Fusobacterium nucleatum subsp. nucleatum (strain ATCC 25586 / DSM 15643 / BCRC 10681 / CIP 101130 / JCM 8532 / KCTC 2640 / LMG 13131 / VPI 4355), this protein is Ribosome-binding factor A.